The primary structure comprises 261 residues: Lys-63-specific deubiquitinase BRCC36 (261 aa).

The region spanning 6-149 (VHIQGDAFLV…YTCFQSVQAQ (144 aa)) is the MPN domain. 3 residues coordinate Zn(2+): histidine 92, histidine 94, and aspartate 105. Positions 92–105 (HSHPHITVWPSHVD) match the JAMM motif motif.

The protein belongs to the peptidase M67A family. BRCC36 subfamily. As to quaternary structure, component of the BRCA1-A complex, at least composed of brca1, bard1, uimc1/rap80, abraxas1, brcc3/brcc36, babam2 and babam1/nba1. In the BRCA1-A complex, interacts directly with ABRAXAS1 and babam2. Component of the BRISC complex, at least composed of ABRAXAS2, brcc3/brcc36, babam2 and babam1/nba1. Within the complex, interacts directly with abraxas2. Both the BRCA1-A complex and the BRISC complex bind polyubiquitin. Zn(2+) serves as cofactor.

The protein resides in the nucleus. The protein localises to the cytoplasm. It is found in the cytoskeleton. Its subcellular location is the spindle pole. In terms of biological role, metalloprotease that specifically cleaves 'Lys-63'-linked polyubiquitin chains. Does not have activity toward 'Lys-48'-linked polyubiquitin chains. Component of the BRCA1-A complex, a complex that specifically recognizes 'Lys-63'-linked ubiquitinated histones H2A and H2AX at DNA lesions sites, leading to target the brca1-bard1 heterodimer to sites of DNA damage at double-strand breaks (DSBs). In the BRCA1-A complex, it specifically removes 'Lys-63'-linked ubiquitin on histones H2A and H2AX, antagonizing the rnf8-dependent ubiquitination at double-strand breaks (DSBs). Catalytic subunit of the BRISC complex, a multiprotein complex that specifically cleaves 'Lys-63'-linked ubiquitin in various substrates. Mediates the specific 'Lys-63'-specific deubiquitination associated with the COP9 signalosome complex (CSN), via the interaction of the BRISC complex with the CSN complex. The BRISC complex is required for normal mitotic spindle assembly and microtubule attachment to kinetochores via its role in deubiquitinating numa1. Plays a role in interferon signaling via its role in the deubiquitination of the interferon receptor ifnar1; deubiquitination increases ifnar1 activity by enhancing its stability and cell surface expression. Acts as a regulator of the NLRP3 inflammasome by mediating deubiquitination of nlrp3. Down-regulates the response to bacterial lipopolysaccharide (LPS) via its role in ifnar1 deubiquitination. This is Lys-63-specific deubiquitinase BRCC36 (brcc3) from Xenopus laevis (African clawed frog).